A 105-amino-acid polypeptide reads, in one-letter code: ATP-dependent Clp protease adapter protein ClpS (105 aa).

Positions 1–27 are disordered; it reads MVVMSAPTEPKSRPGTTGQRESAPEDV.

It belongs to the ClpS family. As to quaternary structure, binds to the N-terminal domain of the chaperone ClpA.

Functionally, involved in the modulation of the specificity of the ClpAP-mediated ATP-dependent protein degradation. This chain is ATP-dependent Clp protease adapter protein ClpS, found in Mycolicibacterium paratuberculosis (strain ATCC BAA-968 / K-10) (Mycobacterium paratuberculosis).